The chain runs to 66 residues: MPKLKTRRAAAKRFRVTGSGKFMRRRAFHNHLLDHKSPKRKRYLGTMAVVDERDHDRVSHMLPYAG.

It belongs to the bacterial ribosomal protein bL35 family.

In Synechococcus sp. (strain RCC307), this protein is Large ribosomal subunit protein bL35.